The chain runs to 423 residues: Histidine--tRNA ligase (423 aa).

The protein belongs to the class-II aminoacyl-tRNA synthetase family. In terms of assembly, homodimer.

The protein localises to the cytoplasm. It catalyses the reaction tRNA(His) + L-histidine + ATP = L-histidyl-tRNA(His) + AMP + diphosphate + H(+). This is Histidine--tRNA ligase from Actinobacillus succinogenes (strain ATCC 55618 / DSM 22257 / CCUG 43843 / 130Z).